Here is a 250-residue protein sequence, read N- to C-terminus: Probable replication-associated protein repA2 (250 aa).

It belongs to the IncFII RepA family.

Its function is as follows. This protein is essential for plasmid replication; it is involved in copy control functions. This is Probable replication-associated protein repA2 (repA2) from Buchnera aphidicola subsp. Acyrthosiphon pisum (strain APS) (Acyrthosiphon pisum symbiotic bacterium).